The primary structure comprises 420 residues: DNA repair protein RadA (420 aa).

ATP is bound at residue 62–69; it reads GDPGIGKS. Positions 218–222 match the RadA KNRFG motif motif; that stretch reads KNRFG. The lon-protease-like stretch occupies residues 317 to 420; the sequence is DAYLKSAGGV…IQEVLKKVFA (104 aa).

It belongs to the RecA family. RadA subfamily.

Functionally, plays a role in repairing double-strand DNA breaks, probably involving stabilizing or processing branched DNA or blocked replication forks. Required for efficient transformation with chromosomal (linear) DNA, but not for replicative plasmid DNA. Its increased sensitivity to a DNA damaging agent suggests it may be required for DNA repair. This Streptococcus pneumoniae (strain ATCC BAA-255 / R6) protein is DNA repair protein RadA.